The chain runs to 180 residues: MQQLKTKYNDQVRPALMQQFGYSSVMAVPRIEKIVVNEGLGSSKEDSKAIDKAAKELALITLQKPIITKAKKSISNFKLRQGMPVGIKVTLRGERMYVFLEKLINIGLPRIRDFRGINPNAFDGRGNYNLGIKEQLIFPEITYDMVDKTRGMDITIVTTAKTDEEARALLQSMGLPFRKQ.

It belongs to the universal ribosomal protein uL5 family. As to quaternary structure, forms a bridge to the 30S subunit in the 70S ribosome. Part of the 50S ribosomal subunit; part of the 5S rRNA/L5/L18/L25 (CTC) subcomplex. Is known to contact the 5S rRNA, 23S rRNA and the P site tRNA.

Its function is as follows. This is one of the proteins that bind and probably mediate the attachment of the 5S RNA into the large ribosomal subunit, where it forms part of the central protuberance. In the 70S ribosome it contacts protein S13 of the 30S subunit (bridge B1b), connecting the 2 subunits; this bridge is implicated in subunit movement. Contacts the P site tRNA; the 5S rRNA and some of its associated proteins might help stabilize positioning of ribosome-bound tRNAs. This Deinococcus radiodurans (strain ATCC 13939 / DSM 20539 / JCM 16871 / CCUG 27074 / LMG 4051 / NBRC 15346 / NCIMB 9279 / VKM B-1422 / R1) protein is Large ribosomal subunit protein uL5 (rplE).